A 340-amino-acid chain; its full sequence is Citramalyl-CoA lyase, mitochondrial (340 aa).

Residues 1-22 (MALRLLRRAARGAAAAALLRLK) constitute a mitochondrion transit peptide. Residues Y50, K57, and K61 each contribute to the substrate site. An N6-acetyllysine mark is found at K57 and K61. K82 and K92 each carry N6-acetyllysine; alternate. K82 and K92 each carry N6-succinyllysine; alternate. R107 contacts substrate. Residues E171 and D206 each contribute to the Mg(2+) site. 272–273 (IH) contacts substrate. K309 is subject to N6-succinyllysine. D320 is an active-site residue.

This sequence belongs to the HpcH/HpaI aldolase family. Citrate lyase beta subunit-like subfamily. In terms of assembly, homotrimer. The cofactor is Mg(2+).

It localises to the mitochondrion. The enzyme catalyses glyoxylate + acetyl-CoA + H2O = (S)-malate + CoA + H(+). It catalyses the reaction propanoyl-CoA + glyoxylate + H2O = 3-methylmalate + CoA + H(+). It carries out the reaction (3S)-citramalyl-CoA = pyruvate + acetyl-CoA. The catalysed reaction is (S)-malyl-CoA + H2O = (S)-malate + CoA + H(+). Functionally, mitochondrial citramalyl-CoA lyase indirectly involved in the vitamin B12 metabolism. Converts citramalyl-CoA into acetyl-CoA and pyruvate in the C5-dicarboxylate catabolism pathway. The C5-dicarboxylate catabolism pathway is required to detoxify itaconate, a vitamin B12-poisoning metabolite. Also acts as a malate synthase in vitro, converting glyoxylate and acetyl-CoA to malate. Also displays malyl-CoA thioesterase activity. Also acts as a beta-methylmalate synthase in vitro, by mediating conversion of glyoxylate and propionyl-CoA to beta-methylmalate. Also has very weak citramalate synthase activity in vitro. The protein is Citramalyl-CoA lyase, mitochondrial of Homo sapiens (Human).